Reading from the N-terminus, the 123-residue chain is Small ribosomal subunit protein uS12 (123 aa).

D89 is subject to 3-methylthioaspartic acid. Residues 100 to 123 (GSLDTSGVSDRKQGRSKYGTKRPK) form a disordered region. A compositionally biased stretch (basic residues) spans 113–123 (GRSKYGTKRPK).

The protein belongs to the universal ribosomal protein uS12 family. Part of the 30S ribosomal subunit. Contacts proteins S8 and S17. May interact with IF1 in the 30S initiation complex.

Functionally, with S4 and S5 plays an important role in translational accuracy. Interacts with and stabilizes bases of the 16S rRNA that are involved in tRNA selection in the A site and with the mRNA backbone. Located at the interface of the 30S and 50S subunits, it traverses the body of the 30S subunit contacting proteins on the other side and probably holding the rRNA structure together. The combined cluster of proteins S8, S12 and S17 appears to hold together the shoulder and platform of the 30S subunit. The protein is Small ribosomal subunit protein uS12 of Saccharophagus degradans (strain 2-40 / ATCC 43961 / DSM 17024).